A 360-amino-acid chain; its full sequence is Metalloendoproteinase 5-MMP (360 aa).

The first 20 residues, 1–20 (MRTLLLTILIFFFTVNPISA), serve as a signal peptide directing secretion. Positions 21 to 142 (KFYTNVSSIP…GGKILRTTEK (122 aa)) are cleaved as a propeptide — activation peptide. N-linked (GlcNAc...) asparagine glycans are attached at residues Asn-25, Asn-36, and Asn-78. Positions 117-124 (PRCGNPDL) match the Cysteine switch motif. Cys-119 lines the Zn(2+) pocket. N-linked (GlcNAc...) asparagine glycosylation is found at Asn-168 and Asn-191. His-270 is a binding site for Zn(2+). The active site involves Glu-271. Positions 274 and 280 each coordinate Zn(2+). Positions 312 to 336 (LYGGNPNGDGGGSKPSRESQSTGGD) are disordered. Ser-337 carries the GPI-anchor amidated serine lipid modification. A propeptide spans 338–360 (VRRWRGWMISLSSIATCIFLISV) (removed in mature form).

This sequence belongs to the peptidase M10A family. Matrix metalloproteinases (MMPs) subfamily. Requires Zn(2+) as cofactor. In terms of tissue distribution, mostly expressed in leaves, roots and stems, and, to a lower extent, in flowers.

It is found in the cell membrane. Its activity is regulated as follows. Repressed by acetohydroxamic acid (AHA). Functionally, matrix metalloproteinases (MMPs) or matrixins may play a role in the degradation and remodeling of the extracellular matrix (ECM) during development or in response to stresses. Active on Mca-KESAbuNLFVLKDpaR-NH(2) (QF75) and, to some extent, on McaPLGLDpaAR-NH(2) (QF24), myelin basic protein (MBP) and beta-casein. This is Metalloendoproteinase 5-MMP from Arabidopsis thaliana (Mouse-ear cress).